The sequence spans 562 residues: Tetratricopeptide repeat protein 34 (562 aa).

The segment at 1-30 is disordered; the sequence is MLHKKPQRANENGISQRKKPSDQDNSSVKE. Residues 19–30 are compositionally biased toward basic and acidic residues; that stretch reads KPSDQDNSSVKE. TPR repeat units follow at residues 51-84, 175-208, 210-242, 304-337, 388-421, 423-455, 461-494, and 509-542; these read DVSR…SSQR, KDSL…EPYN, EALS…DASY, AHFH…NAID, FQAA…SNNN, KYLR…HSSH, AEDY…EHAS, and AGIF…DENN.

This Xenopus laevis (African clawed frog) protein is Tetratricopeptide repeat protein 34 (ttc34).